Consider the following 430-residue polypeptide: Enolase (430 aa).

Position 163 (Gln163) interacts with (2R)-2-phosphoglycerate. The active-site Proton donor is Glu205. Residues Asp242, Glu287, and Asp314 each coordinate Mg(2+). Positions 339, 368, 369, and 390 each coordinate (2R)-2-phosphoglycerate. The active-site Proton acceptor is Lys339.

It belongs to the enolase family. Mg(2+) is required as a cofactor.

The protein localises to the cytoplasm. It is found in the secreted. It localises to the cell surface. It carries out the reaction (2R)-2-phosphoglycerate = phosphoenolpyruvate + H2O. The protein operates within carbohydrate degradation; glycolysis; pyruvate from D-glyceraldehyde 3-phosphate: step 4/5. Its function is as follows. Catalyzes the reversible conversion of 2-phosphoglycerate (2-PG) into phosphoenolpyruvate (PEP). It is essential for the degradation of carbohydrates via glycolysis. In Exiguobacterium sp. (strain ATCC BAA-1283 / AT1b), this protein is Enolase.